Here is a 214-residue protein sequence, read N- to C-terminus: Holliday junction branch migration complex subunit RuvA (214 aa).

The tract at residues Met-1–Lys-67 is domain I. The tract at residues Ser-68 to Ser-146 is domain II. Residues Leu-147–Glu-154 form a flexible linker region. Positions Gln-155 to Ala-214 are domain III.

It belongs to the RuvA family. In terms of assembly, homotetramer. Forms an RuvA(8)-RuvB(12)-Holliday junction (HJ) complex. HJ DNA is sandwiched between 2 RuvA tetramers; dsDNA enters through RuvA and exits via RuvB. An RuvB hexamer assembles on each DNA strand where it exits the tetramer. Each RuvB hexamer is contacted by two RuvA subunits (via domain III) on 2 adjacent RuvB subunits; this complex drives branch migration. In the full resolvosome a probable DNA-RuvA(4)-RuvB(12)-RuvC(2) complex forms which resolves the HJ.

It localises to the cytoplasm. In terms of biological role, the RuvA-RuvB-RuvC complex processes Holliday junction (HJ) DNA during genetic recombination and DNA repair, while the RuvA-RuvB complex plays an important role in the rescue of blocked DNA replication forks via replication fork reversal (RFR). RuvA specifically binds to HJ cruciform DNA, conferring on it an open structure. The RuvB hexamer acts as an ATP-dependent pump, pulling dsDNA into and through the RuvAB complex. HJ branch migration allows RuvC to scan DNA until it finds its consensus sequence, where it cleaves and resolves the cruciform DNA. In Synechococcus sp. (strain CC9605), this protein is Holliday junction branch migration complex subunit RuvA.